The following is a 583-amino-acid chain: Vivapain-1 (583 aa).

Residues 1-34 lie on the Cytoplasmic side of the membrane; that stretch reads MAQDIKIMNLTKSSLEALNRNQMLSKKSSRKILK. A propeptide spans 1 to 338 (activation peptide); the sequence is MAQDIKIMNL…SSSGANLLAD (338 aa). Residues 35-55 form a helical; Signal-anchor for type II membrane protein membrane-spanning segment; that stretch reads ICMYAILTFAMCGVVLICLTA. The Lumenal segment spans residues 56–583; the sequence is MSNSDGSLTQ…IGVEVFYPIL (528 aa). Residues 62 to 82 show a composition bias toward polar residues; sequence SLTQSGSHNQSGSLKGLSSTP. Disordered regions lie at residues 62–83 and 104–125; these read SLTQSGSHNQSGSLKGLSSTPG and PHGNRDPTGDDVEKPADAALPN. N-linked (GlcNAc...) asparagine glycosylation is present at asparagine 70. Positions 106–119 are enriched in basic and acidic residues; it reads GNRDPTGDDVEKPA. N-linked (GlcNAc...) asparagine glycans are attached at residues asparagine 195 and asparagine 272. 3 disulfides stabilise this stretch: cysteine 360–cysteine 402, cysteine 395–cysteine 435, and cysteine 420–cysteine 440. Residue cysteine 363 is part of the active site. Asparagine 381 is a glycosylation site (N-linked (GlcNAc...) asparagine). N-linked (GlcNAc...) asparagine glycosylation is found at asparagine 486 and asparagine 494. Cysteines 489 and 572 form a disulfide. Residues histidine 495 and asparagine 547 contribute to the active site.

Belongs to the peptidase C1 family.

The protein localises to the membrane. Functionally, cysteine protease. The protein is Vivapain-1 of Plasmodium vivax (strain Salvador I).